A 475-amino-acid chain; its full sequence is Sulfate adenylyltransferase subunit 1 (475 aa).

Positions 25-241 constitute a tr-type G domain; that stretch reads KSLLRFLTCG…LENIEIQRVV (217 aa). The G1 stretch occupies residues 34 to 41; the sequence is GSVDDGKS. A GTP-binding site is contributed by 34–41; that stretch reads GSVDDGKS. The tract at residues 92-96 is G2; it reads GITID. A G3 region spans residues 113–116; sequence DTPG. Residues 113–117 and 168–171 each bind GTP; these read DTPGH and NKMD. Positions 168–171 are G4; the sequence is NKMD. A G5 region spans residues 206–208; that stretch reads SAL.

Belongs to the TRAFAC class translation factor GTPase superfamily. Classic translation factor GTPase family. CysN/NodQ subfamily. In terms of assembly, heterodimer composed of CysD, the smaller subunit, and CysN.

It carries out the reaction sulfate + ATP + H(+) = adenosine 5'-phosphosulfate + diphosphate. It participates in sulfur metabolism; hydrogen sulfide biosynthesis; sulfite from sulfate: step 1/3. With CysD forms the ATP sulfurylase (ATPS) that catalyzes the adenylation of sulfate producing adenosine 5'-phosphosulfate (APS) and diphosphate, the first enzymatic step in sulfur assimilation pathway. APS synthesis involves the formation of a high-energy phosphoric-sulfuric acid anhydride bond driven by GTP hydrolysis by CysN coupled to ATP hydrolysis by CysD. In Cronobacter sakazakii (strain ATCC BAA-894) (Enterobacter sakazakii), this protein is Sulfate adenylyltransferase subunit 1.